Consider the following 85-residue polypeptide: ATP synthase subunit c (85 aa).

2 helical membrane-spanning segments follow: residues 10 to 30 (IAVA…FAVL) and 53 to 73 (FIIA…ALLF).

The protein belongs to the ATPase C chain family. In terms of assembly, F-type ATPases have 2 components, F(1) - the catalytic core - and F(0) - the membrane proton channel. F(1) has five subunits: alpha(3), beta(3), gamma(1), delta(1), epsilon(1). F(0) has three main subunits: a(1), b(2) and c(10-14). The alpha and beta chains form an alternating ring which encloses part of the gamma chain. F(1) is attached to F(0) by a central stalk formed by the gamma and epsilon chains, while a peripheral stalk is formed by the delta and b chains.

The protein resides in the cell inner membrane. F(1)F(0) ATP synthase produces ATP from ADP in the presence of a proton or sodium gradient. F-type ATPases consist of two structural domains, F(1) containing the extramembraneous catalytic core and F(0) containing the membrane proton channel, linked together by a central stalk and a peripheral stalk. During catalysis, ATP synthesis in the catalytic domain of F(1) is coupled via a rotary mechanism of the central stalk subunits to proton translocation. Its function is as follows. Key component of the F(0) channel; it plays a direct role in translocation across the membrane. A homomeric c-ring of between 10-14 subunits forms the central stalk rotor element with the F(1) delta and epsilon subunits. In Vibrio cholerae serotype O1 (strain ATCC 39315 / El Tor Inaba N16961), this protein is ATP synthase subunit c.